The primary structure comprises 330 residues: Biotin synthase (330 aa).

A Radical SAM core domain is found at 43–272; the sequence is FMGDKFDTCS…RAFLRFSGGR (230 aa). 3 residues coordinate [4Fe-4S] cluster: cysteine 61, cysteine 65, and cysteine 68. [2Fe-2S] cluster-binding residues include serine 105, cysteine 137, cysteine 197, and arginine 267.

The protein belongs to the radical SAM superfamily. Biotin synthase family. Homodimer. [4Fe-4S] cluster serves as cofactor. [2Fe-2S] cluster is required as a cofactor.

It catalyses the reaction (4R,5S)-dethiobiotin + (sulfur carrier)-SH + 2 reduced [2Fe-2S]-[ferredoxin] + 2 S-adenosyl-L-methionine = (sulfur carrier)-H + biotin + 2 5'-deoxyadenosine + 2 L-methionine + 2 oxidized [2Fe-2S]-[ferredoxin]. The protein operates within cofactor biosynthesis; biotin biosynthesis; biotin from 7,8-diaminononanoate: step 2/2. Functionally, catalyzes the conversion of dethiobiotin (DTB) to biotin by the insertion of a sulfur atom into dethiobiotin via a radical-based mechanism. This is Biotin synthase from Porphyromonas gingivalis (strain ATCC 33277 / DSM 20709 / CIP 103683 / JCM 12257 / NCTC 11834 / 2561).